We begin with the raw amino-acid sequence, 59 residues long: Cuticle protein 7 isoform a (59 aa).

Pyrrolidone carboxylic acid is present on glutamine 1.

The chain is Cuticle protein 7 isoform a from Limulus polyphemus (Atlantic horseshoe crab).